Reading from the N-terminus, the 150-residue chain is Group IIC secretory phospholipase A2 (150 aa).

A signal peptide spans 1–20 (MKGIAIFLVFIFYWTTSTLS). Cystine bridges form between Cys-46–Cys-143, Cys-48–Cys-64, Cys-63–Cys-121, Cys-69–Cys-150, Cys-70–Cys-114, Cys-79–Cys-107, Cys-97–Cys-112, and Cys-99–Cys-105. Residues Tyr-47, Gly-49, and Gly-51 each contribute to the Ca(2+) site. His-67 is a catalytic residue. A Ca(2+)-binding site is contributed by Asp-68. Residue Asn-92 is glycosylated (N-linked (GlcNAc...) asparagine). The active site involves Asp-115.

It belongs to the phospholipase A2 family. Ca(2+) is required as a cofactor. In terms of tissue distribution, testis specific.

Its subcellular location is the secreted. It catalyses the reaction a 1,2-diacyl-sn-glycero-3-phosphocholine + H2O = a 1-acyl-sn-glycero-3-phosphocholine + a fatty acid + H(+). In terms of biological role, PA2 catalyzes the calcium-dependent hydrolysis of the 2-acyl groups in 3-sn-phosphoglycerides. Testis PA2 may be important in the production of prostaglandins, by the release of arachidonic acid, which in turn are necessary for the contractions of the seminiferous tubules and the testicular capsule; they also seem to decrease sperm transit time through the male reproductive tract. The chain is Group IIC secretory phospholipase A2 (Pla2g2c) from Mus musculus (Mouse).